The sequence spans 478 residues: V-type ATP synthase beta chain (478 aa).

This sequence belongs to the ATPase alpha/beta chains family.

Its function is as follows. Produces ATP from ADP in the presence of a proton gradient across the membrane. The V-type beta chain is a regulatory subunit. This is V-type ATP synthase beta chain from Thermus thermophilus (strain ATCC BAA-163 / DSM 7039 / HB27).